Here is a 215-residue protein sequence, read N- to C-terminus: MELSTAKKVVVFDYGFGNVRSAERALARAGAEVEITRDFDTAMNADGLLVPGVGAFAACMKGLKEARGDWIVGRRLAGGRPVMGICVGMQILFERGIEHGVETEGLDEWPGTVGPLEAEIVPHMGWNTVEAPGGSQLFAGLDADARFYFVHSYAVHDWSLDVANPAMRAPLVTWSTHGKPFVAAVENGALWATQFHPEKSGDAGAQLLNNWIGTL.

The Glutamine amidotransferase type-1 domain maps to 8-215 (KVVVFDYGFG…QLLNNWIGTL (208 aa)). The active-site Nucleophile is C86. Active-site residues include H196 and E198.

Heterodimer of HisH and HisF.

The protein localises to the cytoplasm. The enzyme catalyses 5-[(5-phospho-1-deoxy-D-ribulos-1-ylimino)methylamino]-1-(5-phospho-beta-D-ribosyl)imidazole-4-carboxamide + L-glutamine = D-erythro-1-(imidazol-4-yl)glycerol 3-phosphate + 5-amino-1-(5-phospho-beta-D-ribosyl)imidazole-4-carboxamide + L-glutamate + H(+). It carries out the reaction L-glutamine + H2O = L-glutamate + NH4(+). It functions in the pathway amino-acid biosynthesis; L-histidine biosynthesis; L-histidine from 5-phospho-alpha-D-ribose 1-diphosphate: step 5/9. IGPS catalyzes the conversion of PRFAR and glutamine to IGP, AICAR and glutamate. The HisH subunit catalyzes the hydrolysis of glutamine to glutamate and ammonia as part of the synthesis of IGP and AICAR. The resulting ammonia molecule is channeled to the active site of HisF. This Streptomyces avermitilis (strain ATCC 31267 / DSM 46492 / JCM 5070 / NBRC 14893 / NCIMB 12804 / NRRL 8165 / MA-4680) protein is Imidazole glycerol phosphate synthase subunit HisH.